Consider the following 475-residue polypeptide: Glucose-6-phosphate 1-dehydrogenase gcd1 (475 aa).

2 residues coordinate NADP(+): arginine 42 and lysine 146. D-glucose 6-phosphate contacts are provided by lysine 146, glutamate 214, and aspartate 233. The active-site Proton acceptor is the histidine 238. Lysine 332 lines the D-glucose 6-phosphate pocket. NADP(+) is bound by residues arginine 342 and arginine 365.

Belongs to the glucose-6-phosphate dehydrogenase family.

Its subcellular location is the cytoplasm. It carries out the reaction D-glucose 6-phosphate + NADP(+) = 6-phospho-D-glucono-1,5-lactone + NADPH + H(+). It participates in carbohydrate degradation; pentose phosphate pathway; D-ribulose 5-phosphate from D-glucose 6-phosphate (oxidative stage): step 1/3. Catalyzes the rate-limiting step of the oxidative pentose-phosphate pathway, which represents a route for the dissimilation of carbohydrates besides glycolysis. The main function of this enzyme is to provide reducing power (NADPH) and pentose phosphates for fatty acid and nucleic acid synthesis. This is Glucose-6-phosphate 1-dehydrogenase gcd1 from Schizosaccharomyces pombe (strain 972 / ATCC 24843) (Fission yeast).